We begin with the raw amino-acid sequence, 200 residues long: MSDALRELGTHLELKRADCILSWDVTFGELNVDVAPSNLVDFVDFLRSDSSCRFSTLVDITAVDYPERAKRFDVVYHFLSMYQNQRIRLRVSIREDDMVPSITDVHPSANWFEREVFDMFGILFTGHPDLRRILTDYGFRGYPLRKDFPTTGYTEVRYDEAEKRVVYEPVSLVQEYRQFDFMSPWEGADYILPGDEKKEG.

The protein belongs to the complex I 30 kDa subunit family. As to quaternary structure, NDH-1 is composed of 14 different subunits. Subunits NuoB, C, D, E, F, and G constitute the peripheral sector of the complex.

It is found in the cell inner membrane. It carries out the reaction a quinone + NADH + 5 H(+)(in) = a quinol + NAD(+) + 4 H(+)(out). Its function is as follows. NDH-1 shuttles electrons from NADH, via FMN and iron-sulfur (Fe-S) centers, to quinones in the respiratory chain. The immediate electron acceptor for the enzyme in this species is believed to be ubiquinone. Couples the redox reaction to proton translocation (for every two electrons transferred, four hydrogen ions are translocated across the cytoplasmic membrane), and thus conserves the redox energy in a proton gradient. The sequence is that of NADH-quinone oxidoreductase subunit C from Ruegeria pomeroyi (strain ATCC 700808 / DSM 15171 / DSS-3) (Silicibacter pomeroyi).